We begin with the raw amino-acid sequence, 413 residues long: Peptidase T (413 aa).

A Zn(2+)-binding site is contributed by histidine 82. Aspartate 84 is an active-site residue. Aspartate 144 lines the Zn(2+) pocket. Residue glutamate 178 is the Proton acceptor of the active site. 3 residues coordinate Zn(2+): glutamate 179, aspartate 201, and histidine 383.

Belongs to the peptidase M20B family. As to quaternary structure, homotrimer. It depends on Zn(2+) as a cofactor.

The protein localises to the cytoplasm. It catalyses the reaction Release of the N-terminal residue from a tripeptide.. Totally inhibited by EDTA, EGTA, and 1,10-phenanthroline. Strongly inhibited by divalent cations such as Cu(2+), Cd(2+), Co(2+) and Mn(2+). Partially inhibited by the reducing agents 2-mercaptoethanol and dithiothreitol. Cleaves the N-terminal amino acid of tripeptides. Shows broad substrate specificity, exhibiting maximum activity against hydrophobic tripeptides, with the highest activity for Met-Gly-Gly. Therefore this enzyme may play an important role in flavor formation during cheese ripening. Is also able to slowly hydrolyze some hydrophobic dipeptides, but displays no activity against tetrapeptides and the tripeptide Phe-Gly-Gly. In Lactobacillus helveticus (Lactobacillus suntoryeus), this protein is Peptidase T (pepT).